A 119-amino-acid polypeptide reads, in one-letter code: Protein yippee-like 3 (119 aa).

The region spanning 19-116 (RRYSCVHCRA…IELSHMIKDN (98 aa)) is the Yippee domain. 4 residues coordinate Zn(2+): C23, C26, C79, and C82.

It belongs to the yippee family.

It is found in the nucleus. The protein resides in the nucleolus. Functionally, may be involved in proliferation and apoptosis in myeloid precursor cells. The sequence is that of Protein yippee-like 3 (ypel3) from Danio rerio (Zebrafish).